The sequence spans 99 residues: Aspartyl/glutamyl-tRNA(Asn/Gln) amidotransferase subunit C (99 aa).

Belongs to the GatC family. Heterotrimer of A, B and C subunits.

The enzyme catalyses L-glutamyl-tRNA(Gln) + L-glutamine + ATP + H2O = L-glutaminyl-tRNA(Gln) + L-glutamate + ADP + phosphate + H(+). It carries out the reaction L-aspartyl-tRNA(Asn) + L-glutamine + ATP + H2O = L-asparaginyl-tRNA(Asn) + L-glutamate + ADP + phosphate + 2 H(+). In terms of biological role, allows the formation of correctly charged Asn-tRNA(Asn) or Gln-tRNA(Gln) through the transamidation of misacylated Asp-tRNA(Asn) or Glu-tRNA(Gln) in organisms which lack either or both of asparaginyl-tRNA or glutaminyl-tRNA synthetases. The reaction takes place in the presence of glutamine and ATP through an activated phospho-Asp-tRNA(Asn) or phospho-Glu-tRNA(Gln). This Paraburkholderia xenovorans (strain LB400) protein is Aspartyl/glutamyl-tRNA(Asn/Gln) amidotransferase subunit C.